The chain runs to 308 residues: D-alanine--D-alanine ligase B (308 aa).

Positions 102–302 (KKIVKTVGVP…FGELLSWMVE (201 aa)) constitute an ATP-grasp domain. An ATP-binding site is contributed by 128–183 (PMKPPYVIKPVNEGSSFGVVIVSEGQSHPPQVVGSSEWKYGDTVMVERYIHGRELT). 3 residues coordinate Mg(2+): Asp252, Glu269, and Asn271.

This sequence belongs to the D-alanine--D-alanine ligase family. The cofactor is Mg(2+). Mn(2+) serves as cofactor.

It localises to the cytoplasm. It carries out the reaction 2 D-alanine + ATP = D-alanyl-D-alanine + ADP + phosphate + H(+). It functions in the pathway cell wall biogenesis; peptidoglycan biosynthesis. In terms of biological role, cell wall formation. This Mesorhizobium japonicum (strain LMG 29417 / CECT 9101 / MAFF 303099) (Mesorhizobium loti (strain MAFF 303099)) protein is D-alanine--D-alanine ligase B.